The sequence spans 304 residues: N-acetyl-D-glucosamine kinase (304 aa).

ATP-binding positions include glycine 4–lysine 11 and glycine 133–valine 140. Histidine 157, cysteine 177, cysteine 179, and cysteine 184 together coordinate Zn(2+).

It belongs to the ROK (NagC/XylR) family. NagK subfamily.

The catalysed reaction is N-acetyl-D-glucosamine + ATP = N-acetyl-D-glucosamine 6-phosphate + ADP + H(+). It functions in the pathway cell wall biogenesis; peptidoglycan recycling. In terms of biological role, catalyzes the phosphorylation of N-acetyl-D-glucosamine (GlcNAc) derived from cell-wall degradation, yielding GlcNAc-6-P. The polypeptide is N-acetyl-D-glucosamine kinase (Yersinia pseudotuberculosis serotype O:1b (strain IP 31758)).